The following is a 400-amino-acid chain: Lysophospholipid transporter LplT (400 aa).

12 helical membrane passes run 19–39 (VIVA…ATLA), 53–73 (VLQM…GQIA), 91–111 (AGAA…LVGI), 139–159 (MMEA…GVLA), 164–184 (IAAL…NLFI), 195–213 (SWRL…VVLW), 227–247 (LFWG…PVAL), 257–277 (YLNA…AKLV), 281–301 (TVSR…IFSL), 304–324 (ALLP…FFVV), 352–372 (NSAM…GVPA), and 373–393 (VAIG…LWIW).

This sequence belongs to the major facilitator superfamily. LplT (TC 2.A.1.42) family.

Its subcellular location is the cell inner membrane. In terms of biological role, catalyzes the facilitated diffusion of 2-acyl-glycero-3-phosphoethanolamine (2-acyl-GPE) into the cell. This chain is Lysophospholipid transporter LplT, found in Salmonella paratyphi B (strain ATCC BAA-1250 / SPB7).